The following is a 293-amino-acid chain: Probable E3 ubiquitin-protein ligase RNF144A-A (293 aa).

Residues 16–237 (PLVSCKLCLG…YDKGPCRNKL (222 aa)) form a TRIAD supradomain region. Zn(2+)-binding residues include cysteine 20, cysteine 23, cysteine 43, cysteine 46, cysteine 111, cysteine 116, cysteine 135, cysteine 138, cysteine 143, cysteine 146, histidine 151, cysteine 156, cysteine 186, and cysteine 189. The segment at 20-70 (CKLCLGEFPLEQMTTITQCQCVFCTMCLKQYVELLIKEGFETAISCPDSAC) adopts an RING-type 1 zinc-finger fold. An IBR-type zinc finger spans residues 91-156 (QRYRKLQFEK…KASWHPDQDC (66 aa)). An RING-type 2; atypical zinc finger spans residues 186–215 (CPKCKVYIERDEGCAQMMCKNCKHAFCWYC). Cysteine 199 is a catalytic residue. Positions 204, 207, 212, 215, 227, and 233 each coordinate Zn(2+). The helical transmembrane segment at 251 to 271 (VVGIFAGFGLLLLVASPFLLL) threads the bilayer.

This sequence belongs to the RBR family. RNF144 subfamily.

The protein resides in the membrane. It carries out the reaction [E2 ubiquitin-conjugating enzyme]-S-ubiquitinyl-L-cysteine + [acceptor protein]-L-lysine = [E2 ubiquitin-conjugating enzyme]-L-cysteine + [acceptor protein]-N(6)-ubiquitinyl-L-lysine.. The protein operates within protein modification; protein ubiquitination. Functionally, E3 ubiquitin-protein ligase which accepts ubiquitin from E2 ubiquitin-conjugating enzymes ube2l3 and ube2l6 in the form of a thioester and then directly transfers the ubiquitin to targeted substrates. This chain is Probable E3 ubiquitin-protein ligase RNF144A-A (rnf144aa), found in Danio rerio (Zebrafish).